The primary structure comprises 178 residues: Ribosome maturation factor RimM (178 aa).

Residues 101–178 (DGEYYWYQLQ…EMKVEWDADF (78 aa)) form the PRC barrel domain.

It belongs to the RimM family. Binds ribosomal protein uS19.

Its subcellular location is the cytoplasm. In terms of biological role, an accessory protein needed during the final step in the assembly of 30S ribosomal subunit, possibly for assembly of the head region. Essential for efficient processing of 16S rRNA. May be needed both before and after RbfA during the maturation of 16S rRNA. It has affinity for free ribosomal 30S subunits but not for 70S ribosomes. The protein is Ribosome maturation factor RimM of Pseudomonas fluorescens (strain ATCC BAA-477 / NRRL B-23932 / Pf-5).